The sequence spans 715 residues: Epidermal growth factor receptor kinase substrate 8-like protein 2 (715 aa).

Residues 46 to 202 enclose the PID domain; that stretch reads MHETSQYHVQ…RQRQSILPPP (157 aa). Residues 183–243 form a disordered region; that stretch reads QTLKGHQEKI…GFRRRESQEE (61 aa). The segment covering 199–208 has biased composition (pro residues); sequence LPPPQGPAPI. Basic and acidic residues-rich tracts occupy residues 213–222 and 234–243; these read RGGDSPEAKN and GFRRRESQEE. The residue at position 240 (S240) is a Phosphoserine. A Phosphothreonine modification is found at T303. Positions 448–487 are disordered; sequence VSPVSRQSIRNSQKHSPTSEPTPPGDALPPVSSPHTHRGY. S449 is modified (phosphoserine). Positions 451–466 are enriched in polar residues; sequence VSRQSIRNSQKHSPTS. The residue at position 469 (T469) is a Phosphothreonine. An SH3 domain is found at 492-551; the sequence is AMAKYVKILYDFTARNANELSVLKDEVLEVLEDGRQWWKLRSRSGQAGYVPCNILGEARP. Phosphoserine is present on S570.

This sequence belongs to the EPS8 family. As to quaternary structure, interacts with ABI1. Part of a complex that contains SOS1, ABI1 and EPS8L2. Associates with F-actin. As to expression, detected in fibroblasts and placenta.

It is found in the cytoplasm. It localises to the cell projection. Its subcellular location is the stereocilium. Its function is as follows. Stimulates guanine exchange activity of SOS1. May play a role in membrane ruffling and remodeling of the actin cytoskeleton. In the cochlea, is required for stereocilia maintenance in adult hair cells. This Homo sapiens (Human) protein is Epidermal growth factor receptor kinase substrate 8-like protein 2 (EPS8L2).